Here is a 765-residue protein sequence, read N- to C-terminus: Probable dipeptidyl peptidase 4 (765 aa).

The first 14 residues, 1-14, serve as a signal peptide directing secretion; the sequence is MKWSILLLVGCAAA. 8 N-linked (GlcNAc...) asparagine glycosylation sites follow: asparagine 35, asparagine 78, asparagine 101, asparagine 110, asparagine 169, asparagine 218, asparagine 465, and asparagine 490. Residue serine 613 is the Charge relay system of the active site. Residue asparagine 665 is glycosylated (N-linked (GlcNAc...) asparagine). Active-site charge relay system residues include aspartate 690 and histidine 725.

The protein belongs to the peptidase S9B family.

It is found in the secreted. It catalyses the reaction Release of an N-terminal dipeptide, Xaa-Yaa-|-Zaa-, from a polypeptide, preferentially when Yaa is Pro, provided Zaa is neither Pro nor hydroxyproline.. In terms of biological role, extracellular dipeptidyl-peptidase which removes N-terminal dipeptides sequentially from polypeptides having unsubstituted N-termini provided that the penultimate residue is proline. Contributes to pathogenicity. This Aspergillus fumigatus (strain CBS 144.89 / FGSC A1163 / CEA10) (Neosartorya fumigata) protein is Probable dipeptidyl peptidase 4 (dpp4).